A 124-amino-acid chain; its full sequence is MILTMLKGKIHRATVTQAELNYVGSITIDKTLMEAAGILENEKVQIVDINNGARLETYVIPGKRESGVICLNGAAARLVQPGDKVIIIAYAQMNEDEARKYKPSVVFMNDDNTIKEITNYESNE.

Ser-25 acts as the Schiff-base intermediate with substrate; via pyruvic acid in catalysis. Ser-25 bears the Pyruvic acid (Ser) mark. Thr-57 is a binding site for substrate. The Proton donor role is filled by Tyr-58. 73-75 serves as a coordination point for substrate; the sequence is GAA.

The protein belongs to the PanD family. As to quaternary structure, heterooctamer of four alpha and four beta subunits. Pyruvate serves as cofactor. In terms of processing, is synthesized initially as an inactive proenzyme, which is activated by self-cleavage at a specific serine bond to produce a beta-subunit with a hydroxyl group at its C-terminus and an alpha-subunit with a pyruvoyl group at its N-terminus.

It localises to the cytoplasm. The enzyme catalyses L-aspartate + H(+) = beta-alanine + CO2. It participates in cofactor biosynthesis; (R)-pantothenate biosynthesis; beta-alanine from L-aspartate: step 1/1. Its function is as follows. Catalyzes the pyruvoyl-dependent decarboxylation of aspartate to produce beta-alanine. The sequence is that of Aspartate 1-decarboxylase from Clostridium beijerinckii (strain ATCC 51743 / NCIMB 8052) (Clostridium acetobutylicum).